We begin with the raw amino-acid sequence, 160 residues long: 6,7-dimethyl-8-ribityllumazine synthase (160 aa).

Residues Phe22, 57-59 (AVE), and 81-83 (AVI) contribute to the 5-amino-6-(D-ribitylamino)uracil site. (2S)-2-hydroxy-3-oxobutyl phosphate is bound at residue 86–87 (GT). His89 acts as the Proton donor in catalysis. 5-amino-6-(D-ribitylamino)uracil is bound at residue Phe114. A (2S)-2-hydroxy-3-oxobutyl phosphate-binding site is contributed by Arg128.

The protein belongs to the DMRL synthase family. As to quaternary structure, forms an icosahedral capsid composed of 60 subunits, arranged as a dodecamer of pentamers.

The enzyme catalyses (2S)-2-hydroxy-3-oxobutyl phosphate + 5-amino-6-(D-ribitylamino)uracil = 6,7-dimethyl-8-(1-D-ribityl)lumazine + phosphate + 2 H2O + H(+). It participates in cofactor biosynthesis; riboflavin biosynthesis; riboflavin from 2-hydroxy-3-oxobutyl phosphate and 5-amino-6-(D-ribitylamino)uracil: step 1/2. Its function is as follows. Catalyzes the formation of 6,7-dimethyl-8-ribityllumazine by condensation of 5-amino-6-(D-ribitylamino)uracil with 3,4-dihydroxy-2-butanone 4-phosphate. This is the penultimate step in the biosynthesis of riboflavin. In Shewanella sediminis (strain HAW-EB3), this protein is 6,7-dimethyl-8-ribityllumazine synthase.